Consider the following 107-residue polypeptide: UPF0145 protein LVIS_1527 (107 aa).

This sequence belongs to the UPF0145 family.

The chain is UPF0145 protein LVIS_1527 from Levilactobacillus brevis (strain ATCC 367 / BCRC 12310 / CIP 105137 / JCM 1170 / LMG 11437 / NCIMB 947 / NCTC 947) (Lactobacillus brevis).